The chain runs to 1234 residues: PAN2-PAN3 deadenylation complex catalytic subunit PAN2 (1234 aa).

The disordered stretch occupies residues 12 to 32 (LKNSNNNSNSNSSSNNSSNGV). The span at 14–30 (NSNNNSNSNSSSNNSSN) shows a compositional bias: low complexity. 3 WD repeats span residues 176-213 (NHTGKVAMVKEAPKLLALASSTGSLELFDPTSNSSIKT), 272-315 (AFPA…VYHA), and 342-381 (QQQPHLSGLEISENGDFFMFNDGFSNLHLWSITNSGTLSK). Positions 323 to 346 (PLPPAGSSAAQQQKQQQQQQQQPH) are disordered. Over residues 333-344 (QQQKQQQQQQQQ) the composition is skewed to low complexity. The interval 383–537 (FVNFPQEIER…DSIFQCQNDE (155 aa)) is linker. The region spanning 538–946 (KIPNCYSRLQ…KPVIVIYQEV (409 aa)) is the USP domain. Positions 751–775 (PNTQQDQQQQQQQQQQQQQQQQPTN) are disordered. Residues 754–772 (QQDQQQQQQQQQQQQQQQQ) are compositionally biased toward low complexity. Residues D1004, E1006, D1138, and D1191 each contribute to the a divalent metal cation site. Positions 1072 to 1199 (GEAFIDDYIV…EDARTALLLY (128 aa)) constitute an Exonuclease domain.

Belongs to the peptidase C19 family. PAN2 subfamily. Forms a heterotrimer with an asymmetric homodimer of the regulatory subunit PAN3 to form the poly(A)-nuclease (PAN) deadenylation complex. A divalent metal cation is required as a cofactor.

The protein resides in the cytoplasm. The enzyme catalyses Exonucleolytic cleavage of poly(A) to 5'-AMP.. With respect to regulation, positively regulated by the regulatory subunit PAN3. In terms of biological role, catalytic subunit of the poly(A)-nuclease (PAN) deadenylation complex, one of two cytoplasmic mRNA deadenylases involved in mRNA turnover. PAN specifically shortens poly(A) tails of RNA and the activity is stimulated by poly(A)-binding protein PAB1. PAN deadenylation is followed by rapid degradation of the shortened mRNA tails by the CCR4-NOT complex. Deadenylated mRNAs are then degraded by two alternative mechanisms, namely exosome-mediated 3'-5' exonucleolytic degradation, or deadenylation-dependent mRNA decaping and subsequent 5'-3' exonucleolytic degradation by XRN1. May also be involved in post-transcriptional maturation of mRNA poly(A) tails. The chain is PAN2-PAN3 deadenylation complex catalytic subunit PAN2 from Lodderomyces elongisporus (strain ATCC 11503 / CBS 2605 / JCM 1781 / NBRC 1676 / NRRL YB-4239) (Yeast).